A 465-amino-acid chain; its full sequence is Argininosuccinate lyase (465 aa).

Belongs to the lyase 1 family. Argininosuccinate lyase subfamily.

The protein localises to the cytoplasm. It carries out the reaction 2-(N(omega)-L-arginino)succinate = fumarate + L-arginine. It functions in the pathway amino-acid biosynthesis; L-arginine biosynthesis; L-arginine from L-ornithine and carbamoyl phosphate: step 3/3. The protein is Argininosuccinate lyase of Rhodopseudomonas palustris (strain ATCC BAA-98 / CGA009).